The following is a 469-amino-acid chain: Dihydrolipoyl dehydrogenase (469 aa).

FAD is bound by residues 34-42 (EKQYWGGVC), lysine 51, and glycine 114. Residues cysteine 42 and cysteine 47 are joined by a disulfide bond. NAD(+) is bound by residues 179–183 (GAGAI), glutamate 202, and 269–272 (SVGF). FAD is bound by residues aspartate 312 and alanine 320. Residue histidine 448 is the Proton acceptor of the active site.

It belongs to the class-I pyridine nucleotide-disulfide oxidoreductase family. As to quaternary structure, homodimer. Part of an unusual ODH/PDH supercomplex, consisting of AceE (E1), AceF (E2), and Lpd (E3) together with OdhA (E1+E2). It depends on FAD as a cofactor.

It is found in the cytoplasm. The catalysed reaction is N(6)-[(R)-dihydrolipoyl]-L-lysyl-[protein] + NAD(+) = N(6)-[(R)-lipoyl]-L-lysyl-[protein] + NADH + H(+). The protein operates within carbohydrate metabolism; tricarboxylic acid cycle; succinyl-CoA from 2-oxoglutarate (dehydrogenase route): step 1/1. Lipoamide dehydrogenase is an essential component of the pyruvate dehydrogenase (PDH) and 2-oxoglutarate dehydrogenase (ODH) complexes. Catalyzes the reoxidation of dihydrolipoyl groups which are covalently attached to the lipoate acyltransferase components (E2) of the complexes. Also catalyzes a reversible NADH:NAD(+) transhydrogenation, and is able to transfer electrons from NADH to various redox-active compounds and quinones. May be involved in quinone redox cycling in C.glutamicum. The protein is Dihydrolipoyl dehydrogenase (lpd) of Corynebacterium glutamicum (strain ATCC 13032 / DSM 20300 / JCM 1318 / BCRC 11384 / CCUG 27702 / LMG 3730 / NBRC 12168 / NCIMB 10025 / NRRL B-2784 / 534).